Reading from the N-terminus, the 354-residue chain is Heat-inducible transcription repressor HrcA (354 aa).

Belongs to the HrcA family.

Its function is as follows. Negative regulator of class I heat shock genes (grpE-dnaK-dnaJ and groELS operons). Prevents heat-shock induction of these operons. In Herpetosiphon aurantiacus (strain ATCC 23779 / DSM 785 / 114-95), this protein is Heat-inducible transcription repressor HrcA.